The primary structure comprises 124 residues: MPTIQQLVRQAREKVVRKSTAPALKESPQKRGVCTRVYTTTPKKPNSALRKVARVRLTNGIEVTAYIPGIGHNLQEHSVVLVRGGRVKDLPGVRYHIVRGTLDAAGVQNRNQGRSKYGAKRPKK.

A 3-methylthioaspartic acid modification is found at Asp89.

This sequence belongs to the universal ribosomal protein uS12 family. Part of the 30S ribosomal subunit. Contacts proteins S8 and S17. May interact with IF1 in the 30S initiation complex.

With S4 and S5 plays an important role in translational accuracy. Its function is as follows. Interacts with and stabilizes bases of the 16S rRNA that are involved in tRNA selection in the A site and with the mRNA backbone. Located at the interface of the 30S and 50S subunits, it traverses the body of the 30S subunit contacting proteins on the other side and probably holding the rRNA structure together. The combined cluster of proteins S8, S12 and S17 appears to hold together the shoulder and platform of the 30S subunit. The chain is Small ribosomal subunit protein uS12 from Moorella thermoacetica (strain ATCC 39073 / JCM 9320).